A 53-amino-acid chain; its full sequence is Photosystem II reaction center protein K (53 aa).

Residues 1 to 16 (MLKFYLENVFHLIFFA) constitute a propeptide that is removed on maturation. A helical transmembrane segment spans residues 28–48 (IVNVMPIIPLFFFLLAFVWQA).

The protein belongs to the PsbK family. In terms of assembly, PSII is composed of 1 copy each of membrane proteins PsbA, PsbB, PsbC, PsbD, PsbE, PsbF, PsbH, PsbI, PsbJ, PsbK, PsbL, PsbM, PsbT, PsbX, PsbY, PsbZ, Psb30/Ycf12, at least 3 peripheral proteins of the oxygen-evolving complex and a large number of cofactors. It forms dimeric complexes.

It is found in the plastid. Its subcellular location is the chloroplast thylakoid membrane. Its function is as follows. One of the components of the core complex of photosystem II (PSII). PSII is a light-driven water:plastoquinone oxidoreductase that uses light energy to abstract electrons from H(2)O, generating O(2) and a proton gradient subsequently used for ATP formation. It consists of a core antenna complex that captures photons, and an electron transfer chain that converts photonic excitation into a charge separation. The sequence is that of Photosystem II reaction center protein K from Huperzia lucidula (Shining clubmoss).